A 4383-amino-acid chain; its full sequence is Replicase polyprotein 1a (4383 aa).

One can recognise a CoV Nsp1 globular domain in the interval 54-196 (PENHVMVDCR…PWVMYLRKRG (143 aa)). The BetaCoV Nsp1 C-terminal domain occupies 216-246 (FKVEDAYDQVHDEPKGKFSKKAYALIRGYRG). Positions 250-514 (LLYVDQYGCD…VKETNLICKA (265 aa)) constitute a CoV Nsp2 N-terminal domain. 4 residues coordinate Zn(2+): Cys-392, Cys-397, Cys-413, and Cys-416. Positions 392–416 (CEQDSCDFKGWIPGNMIDGFACTTC) are C4. Residues 524-713 (CGNLHQRELL…AQAFQSVAKV (190 aa)) enclose the CoV Nsp2 middle domain. The CoV Nsp2 C-terminal domain occupies 733 to 851 (RRRICLSGRK…LDQAWRVPCA (119 aa)). The Ubiquitin-like 1 domain maps to 853–966 (RRVTFKEQPT…LYCAFTAPED (114 aa)). A disordered region spans residues 995–1025 (PCVASEQEESSEVLEDTLDDGPSVETSDSQV). Acidic residues predominate over residues 1000 to 1013 (EQEESSEVLEDTLD). Positions 1036 to 1274 (DLESVIQDYE…IAQLYGSCIT (239 aa)) constitute a Peptidase C16 1 domain. The active-site For PL1-PRO activity is the Cys-1074. Zn(2+)-binding residues include Cys-1151, Cys-1154, Cys-1177, and Cys-1179. The C4-type 1 zinc finger occupies 1151 to 1179 (CIKCDLALKLKGLDAMFFYGDVVSHICKC). Catalysis depends on for PL1-PRO activity residues His-1225 and Asp-1236. The Macro domain occupies 1275-1435 (PNVCFVKGDI…LISKCQITAV (161 aa)). In terms of domain architecture, DPUP spans 1491–1563 (DDARTFVQSN…VAQIKALFLD (73 aa)). Residues 1562–1617 (LDKVDILLTVDGVNFTNRFVPVGESFGKSLGNVFCDGVNVTKHKCDINYKGKVFFQ) form the Ubiquitin-like 2 domain. The region spanning 1631-1892 (SSFNFDQKEL…KIEYKPDLSQ (262 aa)) is the Peptidase C16 2 domain. Cys-1671 serves as the catalytic For PL2-PRO activity. The Zn(2+) site is built by Cys-1749, Cys-1751, Cys-1783, and Cys-1785. The segment at 1749–1785 (CKCGVKQEQRTGLDAVMHFGTLSREDLEIGYTVDCSC) adopts a C4-type 2 zinc-finger fold. Active-site for PL2-PRO activity residues include His-1828 and Asp-1842. The Nucleic acid-binding domain occupies 1906–2007 (IKAQFKTFEK…TYFNRPLLVD (102 aa)). One can recognise a G2M domain in the interval 2020 to 2169 (DDSGDSSESG…ADNKVIYTTE (150 aa)). 3 helical membrane passes run 2138-2158 (TSACFNFIKWLFVLLFGWIKI), 2199-2219 (ACIIATIFLLWFNFIYANVIF), and 2221-2241 (DFYLPKIGFLPTFVGKIAQWI). The segment at 2138–2385 (TSACFNFIKW…ASFIKLFSLF (248 aa)) is HD1. In terms of domain architecture, 3Ecto spans 2235-2296 (GKIAQWIKNT…AIDVVQYEAD (62 aa)). Cystine bridges form between Cys-2251-Cys-2275 and Cys-2266-Cys-2272. 3 helical membrane passes run 2313–2333 (LIVSYALYTAWFYPLFALISI), 2343–2363 (LFMLSTLHWSFRLLVALANML), and 2365–2385 (AHVFMRFYIIIASFIKLFSLF). The Y1 stretch occupies residues 2383–2473 (SLFKHVAYGC…ELKRPIQPTD (91 aa)). The region spanning 2383–2750 (SLFKHVAYGC…LTTPFSLKGG (368 aa)) is the CoV Nsp3 Y domain. His-2387, Cys-2392, Cys-2397, Cys-2400, Cys-2433, His-2436, Cys-2440, and Cys-2443 together coordinate Zn(2+). Residues 2387–2400 (HVAYGCSKSGCLFC) form a ZF1 region. The segment at 2433–2443 (CSKHQWNCIDC) is ZF2. A Y2 region spans residues 2474-2566 (VAYHTVTDVK…MVDKNLITTA (93 aa)). The tract at residues 2474-2750 (VAYHTVTDVK…LTTPFSLKGG (277 aa)) is coV-Y. Residues 2567–2649 (NTGTSVTETM…DSVMSAVSAG (83 aa)) form a Y3 region. The Y4 stretch occupies residues 2650–2750 (LELTDESCNN…LTTPFSLKGG (101 aa)). The next 7 helical transmembrane spans lie at 2752–2772 (VFSYFVYVCFVLSLVCFIGLW), 2824–2844 (STFGLSYYSNSMACPIVVAVI), 3009–3029 (VFDLIYQLFKGLAQPVDFLAL), 3031–3051 (ASSIAGAILAVIVVLVFYYLI), 3063–3083 (VVFVNVIVWCVNFMMLFVFQV), 3090–3110 (VYAICYFYATLYFPSEISVIM), and 3115–3135 (LVMYGTIMPLWFCLLYIAVVV). Residues 2752 to 3135 (VFSYFVYVCF…FCLLYIAVVV (384 aa)) are HD2. In terms of domain architecture, Nsp4C spans 3149-3246 (LGTSVRSDGT…TASVSTSFLQ (98 aa)). Residues 3247–3549 (SGIVKMVNPT…YQQLAGIKLQ (303 aa)) form the Peptidase C30 domain. Catalysis depends on for 3CL-PRO activity residues His-3287 and Cys-3391. Residues 3319–3775 (LSLTVMSYQM…IISCYWGLFS (457 aa)) are HD3. Transmembrane regions (helical) follow at residues 3558–3578 (GTVCWIMASTFLFSCIITAFV), 3588–3608 (TNMFSITFCALCVISLAMLLV), 3615–3635 (LTMYITPVLFTLLYNNYLVVY), 3657–3677 (TYTDEVIYGMLLLVGMVFVTL), 3684–3704 (LFSFIMFVGRLISVFSLWYKG), 3711–3731 (ILLMLASLFGTYTWTTVLSMA), and 3755–3775 (IVLLCYLFIGYIISCYWGLFS). The RdRp Nsp7 cofactor domain maps to 3837-3925 (SKLTDVKCAN…DYAKDNTVLQ (89 aa)). Positions 3926-4122 (ALQSEFVNMA…YNEVSATVLQ (197 aa)) constitute a RdRp Nsp8 cofactor domain. The 110-residue stretch at 4123–4232 (NNELMPAKLK…GTISSTVRLQ (110 aa)) folds into the Nsp9 ssRNA-binding domain. The 138-residue stretch at 4233–4370 (AGTATEYASN…CVSTDTTVQS (138 aa)) folds into the ExoN/MTase coactivator domain. Zn(2+) contacts are provided by Cys-4306, Cys-4309, His-4315, Cys-4322, Cys-4348, Cys-4351, Cys-4359, and Cys-4361. Zinc fingers lie at residues 4306–4322 (CIYCRARVEHPDVDGLC) and 4348–4361 (CRVCGFWRDGSCSC).

This sequence belongs to the coronaviruses polyprotein 1ab family. In terms of assembly, 3CL-PRO exists as monomer and homodimer. Eight copies of nsp7 and eight copies of nsp8 assemble to form a heterohexadecamer. Nsp9 is a dimer. Nsp10 forms a dodecamer. Post-translationally, specific enzymatic cleavages in vivo by its own proteases yield mature proteins. 3CL-PRO and PL-PRO proteinases are autocatalytically processed.

The protein resides in the host membrane. Its subcellular location is the host cytoplasm. It is found in the host perinuclear region. It catalyses the reaction Thiol-dependent hydrolysis of ester, thioester, amide, peptide and isopeptide bonds formed by the C-terminal Gly of ubiquitin (a 76-residue protein attached to proteins as an intracellular targeting signal).. It carries out the reaction TSAVLQ-|-SGFRK-NH2 and SGVTFQ-|-GKFKK the two peptides corresponding to the two self-cleavage sites of the SARS 3C-like proteinase are the two most reactive peptide substrates. The enzyme exhibits a strong preference for substrates containing Gln at P1 position and Leu at P2 position.. The catalysed reaction is a 5'-end diphospho-ribonucleoside in mRNA + GTP + H(+) = a 5'-end (5'-triphosphoguanosine)-ribonucleoside in mRNA + diphosphate. The papain-like proteinase 1 (PL1-PRO) and papain-like proteinase 2 (PL2-PRO) are responsible for the cleavages located at the N-terminus of the replicase polyprotein. In addition, PLP2 possesses a deubiquitinating/deISGylating activity and processes both 'Lys-48'- and 'Lys-63'-linked polyubiquitin chains from cellular substrates. Antagonizes innate immune induction of type I interferon by blocking the phosphorylation, dimerization and subsequent nuclear translocation of host IRF-3. Its function is as follows. Responsible for the majority of cleavages as it cleaves the C-terminus of replicase polyprotein at 11 sites. Recognizes substrates containing the core sequence [ILMVF]-Q-|-[SGACN]. Inhibited by the substrate-analog Cbz-Val-Asn-Ser-Thr-Leu-Gln-CMK. Also contains an ADP-ribose-1''-phosphate (ADRP)-binding function. Functionally, nsp7-nsp8 hexadecamer may possibly confer processivity to the polymerase, maybe by binding to dsRNA or by producing primers utilized by the latter. In terms of biological role, catalytic subunit of viral RNA capping enzyme which catalyzes the RNA guanylyltransferase reaction for genomic and sub-genomic RNAs. The kinase-like NiRAN domain of NSP12 transfers RNA to the amino terminus of NSP9, forming a covalent RNA-protein intermediate. Subsequently, the NiRAN domain transfers RNA to GDP, forming the core cap structure GpppA-RNA. The NSP14 and NSP16 methyltransferases then add methyl groups to form functional cap structures. Binds to the 40S ribosomal subunit and inhibits host translation. The nsp1-40S ribosome complex further induces an endonucleolytic cleavage near the 5'UTR of host mRNAs, targeting them for degradation. This inhibits the integrated stress response (ISR) in the infected cell by preventing EIF2S1/eIF2-alpha phosphorylation upstream of stress granule formation and depletes host G3BP1. By suppressing host gene expression, nsp1 facilitates efficient viral gene expression in infected cells and evasion from host immune response. This Human coronavirus OC43 (HCoV-OC43) protein is Replicase polyprotein 1a.